The chain runs to 214 residues: Uridine kinase (214 aa).

An ATP-binding site is contributed by 11 to 18; sequence GGSGSGKT.

This sequence belongs to the uridine kinase family.

It localises to the cytoplasm. It carries out the reaction uridine + ATP = UMP + ADP + H(+). The catalysed reaction is cytidine + ATP = CMP + ADP + H(+). The protein operates within pyrimidine metabolism; CTP biosynthesis via salvage pathway; CTP from cytidine: step 1/3. Its pathway is pyrimidine metabolism; UMP biosynthesis via salvage pathway; UMP from uridine: step 1/1. The chain is Uridine kinase from Brevibacillus brevis (strain 47 / JCM 6285 / NBRC 100599).